Here is a 221-residue protein sequence, read N- to C-terminus: FMN-dependent NADH:quinone oxidoreductase 1 (221 aa).

FMN-binding positions include 17 to 19 (SAS) and 148 to 151 (SSGG).

Belongs to the azoreductase type 1 family. Homodimer. FMN serves as cofactor.

It carries out the reaction 2 a quinone + NADH + H(+) = 2 a 1,4-benzosemiquinone + NAD(+). The enzyme catalyses N,N-dimethyl-1,4-phenylenediamine + anthranilate + 2 NAD(+) = 2-(4-dimethylaminophenyl)diazenylbenzoate + 2 NADH + 2 H(+). Quinone reductase that provides resistance to thiol-specific stress caused by electrophilic quinones. In terms of biological role, also exhibits azoreductase activity. Catalyzes the reductive cleavage of the azo bond in aromatic azo compounds to the corresponding amines. This is FMN-dependent NADH:quinone oxidoreductase 1 from Clostridium acetobutylicum (strain ATCC 824 / DSM 792 / JCM 1419 / IAM 19013 / LMG 5710 / NBRC 13948 / NRRL B-527 / VKM B-1787 / 2291 / W).